Reading from the N-terminus, the 1728-residue chain is Nebulin-related-anchoring protein (1728 aa).

Positions 4–64 constitute an LIM zinc-binding domain; that stretch reads QACSRCGYGV…HAHNPKNNTF (61 aa). 41 Nebulin repeats span residues 173–200, 201–235, 244–271, 313–340, 345–379, 386–414, 416–450, 484–518, 519–553, 555–589, 599–623, 624–658, 659–689, 699–721, 723–757, 758–792, 794–828, 841–866, 867–893, 898–932, 943–960, 966–1000, 1001–1035, 1037–1071, 1075–1109, 1110–1136, 1141–1175, 1180–1203, 1209–1243, 1244–1278, 1280–1314, 1318–1352, 1353–1379, 1384–1418, 1425–1446, 1452–1478, 1487–1521, 1523–1557, 1561–1595, 1596–1630, and 1637–1661; these read TPAYQRAKAANQLASQVQYKRGHDERVS, TFTPVADTPELLRAKAGGQLQNDVRYTEDGGQQRG, TPAYQIAKRATELASDVRYHQQYHREMK, TPAYQNAKKANELVSDIKYRQDFHKMKG, HSLAAQDNLVLKRAQSVSKLVSEVEYKKGLENSKG, ETPQFRNVSKISKFTSDNKYKENYQTQLR, HYDGVGMDRRMLHALKVGSLASNVAYKADYKHDVV, KFSSVTNTPQIVQAKINAQQLSHVNYRADYERNKL, NYTLPQDAPQLLKAKANAELFSEVKYKEGWQKTKG, GFEMKLDAMSLLAAKASGELASSVKYKEEYEKMKG, LLHSLQVAKMSSEVEYKKGFEESKT, HFNLPMDMVNLRHAKKAQALASDLDYRKKLHDYTV, LPEDMKTQWAKKAYGLQSELQYKADLAWMRG, NLEQAKKAGQLISEKNYRQRVDE, KFTSVADSSQMEHAKKSQGLQNAVAYKAGNEQSVH, QYTISKDEPLFLRARANAAQLSETLYKSSWEKQKA, GFELRLDSLAFLTAKAKRDLASEVKYKEDYERSRG, QMSHSLQMSKLQSDLEYKKGFEDTRS, QCHISLDMVHLVHARQAQHLATDVGYR, CFTALPTDMKVEWAKKAYGLQSDNQYRADMKWMKG, VEQAKKAGELISEKKYRQ, KFTSIKDTPEMVQARISYTQAVDRLYREQGENVKH, HYTQTADLPEVLLAKLNAMNISETRYKESWSRLRD, GYKLRLDALPFQAAKASSEVISDYKYKEAFERMKG, GSRSLEDDLSLAHSVHATSLQSDVNYKKGFEHAKA, HFHLPLDMVTLVHAKKAQTLASDQDYR, QHTVLAEDLRLSCAKKAHKLQSENLYRSDLNFMRG, VPGTLEIEGRKKASELISESKYRQ, KYTAVTDTPNLLHAKYSNQITNERLYKAAGEDARH, QYTMTLGLPEFIRAKTNAANLSEAKYKEAWHNLRA, GYKLTIDALPFQAARASGDIASDFLYRHEFVKERG, GVRNVSDDPRLLHCLRMGQLQSENQYRKEAASSQA, QCHLPMDMMYLVHARKAQALASDHDYR, EFTALPEDLKMAWAKKAHALQSEFRYKADLMGMKG, QSPQIESAKKAGDLISETKYRK, KFTTVVDSPDLIHAKESYMHCNERLYR, RYTPIPDHPDFTRARMNAMHLSDKVYRNAWEQSRA, GYDFRLDAIPFQTARVSRDIASDFRYKEAFLRDRG, GYRSISDDPRTTHFLRVGRLQSDNEYRKAFAKGRS, QFHSRADQPGFLQAKRSQQLASDVLYRQPLPQHTS, and LKHARKAHQLQSDVKYKSDLNLTRG. At Thr203 the chain carries Phosphothreonine. Ser1078 is modified (phosphoserine).

Interacts with actin, alpha-actinin, KLHL41, TLN1 and VCL. Interacts with CSRP3. As to expression, expressed in cardiac and skeletal muscle. Not detected in kidney, spleen, liver, brain, lung, stomach or uterus.

In terms of biological role, may be involved in anchoring the terminal actin filaments in the myofibril to the membrane and in transmitting tension from the myofibrils to the extracellular matrix. This is Nebulin-related-anchoring protein from Mus musculus (Mouse).